The following is a 185-amino-acid chain: Capsid protein (185 aa).

The interval Asn136–Cys185 is disordered. The segment covering Val149 to Ser178 has biased composition (basic residues). Ser157, Ser164, and Ser172 each carry phosphoserine; by host. The 1; half-length repeat unit spans residues Ser157–Pro163. The 3 X 8 AA repeats of S-P-R-R-R-[PR]-S-Q stretch occupies residues Ser157–Gln179. The short motif at Arg160–Arg177 is the Bipartite nuclear localization signal element. 2 repeat units span residues Ser164–Pro171 and Ser172–Gln179. An RNA binding region spans residues Gln179–Cys185.

This sequence belongs to the orthohepadnavirus core antigen family. As to quaternary structure, homodimerizes, then multimerizes. Interacts with cytosol exposed regions of viral L glycoprotein present in the reticulum-to-Golgi compartment. Interacts with human FLNB. Phosphorylated form interacts with host importin alpha; this interaction depends on the exposure of the NLS, which itself depends upon genome maturation and/or phosphorylation of the capsid protein. Interacts with host NUP153. Post-translationally, phosphorylated by host SRPK1, SRPK2, and maybe protein kinase C or GAPDH. Phosphorylation is critical for pregenomic RNA packaging. Protein kinase C phosphorylation is stimulated by HBx protein and may play a role in transport of the viral genome to the nucleus at the late step during the viral replication cycle.

It localises to the virion. Its subcellular location is the host cytoplasm. In terms of biological role, self assembles to form an icosahedral capsid. Most capsids appear to be large particles with an icosahedral symmetry of T=4 and consist of 240 copies of capsid protein, though a fraction forms smaller T=3 particles consisting of 180 capsid proteins. Entering capsids are transported along microtubules to the nucleus. Phosphorylation of the capsid is thought to induce exposure of nuclear localization signal in the C-terminal portion of the capsid protein that allows binding to the nuclear pore complex via the importin (karyopherin-) alpha and beta. Capsids are imported in intact form through the nuclear pore into the nuclear basket, where it probably binds NUP153. Only capsids that contain the mature viral genome can release the viral DNA and capsid protein into the nucleoplasm. Immature capsids get stuck in the basket. Capsids encapsulate the pre-genomic RNA and the P protein. Pre-genomic RNA is reverse-transcribed into DNA while the capsid is still in the cytoplasm. The capsid can then either be directed to the nucleus, providing more genomes for transcription, or bud through the endoplasmic reticulum to provide new virions. This chain is Capsid protein, found in Hepatitis B virus genotype A2 subtype adw2 (strain Rutter 1979) (HBV-A).